We begin with the raw amino-acid sequence, 286 residues long: ATP synthase gamma chain (286 aa).

It belongs to the ATPase gamma chain family. As to quaternary structure, F-type ATPases have 2 components, CF(1) - the catalytic core - and CF(0) - the membrane proton channel. CF(1) has five subunits: alpha(3), beta(3), gamma(1), delta(1), epsilon(1). CF(0) has three main subunits: a, b and c.

The protein localises to the cell membrane. In terms of biological role, produces ATP from ADP in the presence of a proton gradient across the membrane. The gamma chain is believed to be important in regulating ATPase activity and the flow of protons through the CF(0) complex. The polypeptide is ATP synthase gamma chain (Malacoplasma penetrans (strain HF-2) (Mycoplasma penetrans)).